The primary structure comprises 195 residues: MALCARAALLLGVLQVLALLGAAQDPTDAQGSASGNHSVLTSNINITENTNQTMSVVSNQTSEMQSTAKPSVLPKTTTLITVKPATIVKISTPGVLPHVTPTASKSTPNASASPNSTHTSASMTTPAHSSLLTTVTVSATTHPTKGKGSKFDAGSFVGGIVLTLGVLSILYIGCKMYYSRRGIRYRSIDEHDAII.

A signal peptide spans 1-23; that stretch reads MALCARAALLLGVLQVLALLGAA. At 24–152 the chain is on the extracellular side; it reads QDPTDAQGSA…PTKGKGSKFD (129 aa). Residues asparagine 36, asparagine 45, asparagine 51, asparagine 59, asparagine 109, and asparagine 115 are each glycosylated (N-linked (GlcNAc...) asparagine). Positions 99-127 are disordered; sequence VTPTASKSTPNASASPNSTHTSASMTTPA. Residues 101 to 126 are compositionally biased toward polar residues; sequence PTASKSTPNASASPNSTHTSASMTTP. Residues 153 to 173 form a helical membrane-spanning segment; the sequence is AGSFVGGIVLTLGVLSILYIG. At 174 to 195 the chain is on the cytoplasmic side; sequence CKMYYSRRGIRYRSIDEHDAII. Serine 187 carries the post-translational modification Phosphoserine.

It belongs to the CD164 family.

It is found in the membrane. Its function is as follows. Implicated in oncotic cell death, characterized by cell swelling, organelle swelling, vacuolization and increased membrane permeability. The protein is Porimin (Tmem123) of Mus musculus (Mouse).